Here is an 859-residue protein sequence, read N- to C-terminus: Heat shock protein 105 kDa (859 aa).

Residue S2 is modified to N-acetylserine. K471 carries the post-translational modification N6-acetyllysine. S509 and S510 each carry phosphoserine. Disordered stretches follow at residues 515 to 585 (MDCQ…PPEA) and 797 to 859 (CEPV…MDLD). Polar residues predominate over residues 533-555 (QQDNNEAGTQPQVQTDGHQTSQS). A Phosphoserine modification is found at S558. T562 carries the post-translational modification Phosphothreonine. Composition is skewed to basic and acidic residues over residues 564 to 585 (EENKIPDADKANEKKVDQPPEA) and 806 to 815 (PKIESPKLER). Position 810 is a phosphoserine (S810). T816 is modified (phosphothreonine). Positions 822-831 (TDKKEEDLDG) are enriched in basic and acidic residues. Positions 850-859 (EKSSINMDLD) are enriched in polar residues.

The protein belongs to the heat shock protein 70 family. In terms of assembly, interacts with HSPA8/HSC70. Interacts with HSPA1A (via NBD) and HSPA1B (via NBD). Post-translationally, phosphorylation on Ser-509 may be important for regulation of the HSPA8/HSC70 chaperone activity.

Its subcellular location is the cytoplasm. Its function is as follows. Acts as a nucleotide-exchange factor (NEF) for chaperone proteins HSPA1A and HSPA1B, promoting the release of ADP from HSPA1A/B thereby triggering substrate release. Prevents the aggregation of denatured proteins in cells under severe stress, on which the ATP levels decrease markedly. Inhibits HSPA8/HSC70 ATPase and chaperone activities. This chain is Heat shock protein 105 kDa (HSPH1), found in Bos taurus (Bovine).